The chain runs to 710 residues: Phosphoribosylformylglycinamidine synthase subunit PurL (710 aa).

Residue His36 is part of the active site. Residues Tyr39 and Lys80 each contribute to the ATP site. Glu82 contacts Mg(2+). Substrate contacts are provided by residues 83–86 (SHNH) and Arg105. The Proton acceptor role is filled by His84. Asp106 lines the Mg(2+) pocket. Residue Gln226 participates in substrate binding. Asp252 is a binding site for Mg(2+). Residue 294–296 (ETQ) coordinates substrate. ATP contacts are provided by Asp470 and Gly507. Ser510 contributes to the substrate binding site.

It belongs to the FGAMS family. Monomer. Part of the FGAM synthase complex composed of 1 PurL, 1 PurQ and 2 PurS subunits.

The protein resides in the cytoplasm. It carries out the reaction N(2)-formyl-N(1)-(5-phospho-beta-D-ribosyl)glycinamide + L-glutamine + ATP + H2O = 2-formamido-N(1)-(5-O-phospho-beta-D-ribosyl)acetamidine + L-glutamate + ADP + phosphate + H(+). It participates in purine metabolism; IMP biosynthesis via de novo pathway; 5-amino-1-(5-phospho-D-ribosyl)imidazole from N(2)-formyl-N(1)-(5-phospho-D-ribosyl)glycinamide: step 1/2. Functionally, part of the phosphoribosylformylglycinamidine synthase complex involved in the purines biosynthetic pathway. Catalyzes the ATP-dependent conversion of formylglycinamide ribonucleotide (FGAR) and glutamine to yield formylglycinamidine ribonucleotide (FGAM) and glutamate. The FGAM synthase complex is composed of three subunits. PurQ produces an ammonia molecule by converting glutamine to glutamate. PurL transfers the ammonia molecule to FGAR to form FGAM in an ATP-dependent manner. PurS interacts with PurQ and PurL and is thought to assist in the transfer of the ammonia molecule from PurQ to PurL. The sequence is that of Phosphoribosylformylglycinamidine synthase subunit PurL from Sulfolobus acidocaldarius (strain ATCC 33909 / DSM 639 / JCM 8929 / NBRC 15157 / NCIMB 11770).